Consider the following 263-residue polypeptide: Isoprenyl transferase (263 aa).

Asp-38 is an active-site residue. A Mg(2+)-binding site is contributed by Asp-38. Residues 39–42, His-55, and 83–85 contribute to the substrate site; these read GNRR and STD. Catalysis depends on Asn-86, which acts as the Proton acceptor. Residues Phe-87, Arg-89, Arg-212, and 218–220 contribute to the substrate site; that span reads RLS. A Mg(2+)-binding site is contributed by Glu-231.

It belongs to the UPP synthase family. Homodimer. The cofactor is Mg(2+).

In terms of biological role, catalyzes the condensation of isopentenyl diphosphate (IPP) with allylic pyrophosphates generating different type of terpenoids. The polypeptide is Isoprenyl transferase (Thermus thermophilus (strain ATCC 27634 / DSM 579 / HB8)).